The sequence spans 176 residues: Probable DNA-directed RNA polymerase subunit delta (176 aa).

One can recognise an HTH HARE-type domain in the interval 14 to 81; sequence KSFIDMAYTL…GENLWGLRDW (68 aa). Residues 114 to 176 are disordered; sequence LGEDEMDDDD…DFEDEEDFKA (63 aa). Acidic residues-rich tracts occupy residues 116-145 and 153-176; these read EDEMDDDDDIPAQTDDQEELNDPEDEQVEE and VIEEDEDELDEDEEDFEDEEDFKA.

It belongs to the RpoE family. RNAP is composed of a core of 2 alpha, a beta and a beta' subunits. The core is associated with a delta subunit and one of several sigma factors.

Functionally, participates in both the initiation and recycling phases of transcription. In the presence of the delta subunit, RNAP displays an increased specificity of transcription, a decreased affinity for nucleic acids, and an increased efficiency of RNA synthesis because of enhanced recycling. The sequence is that of Probable DNA-directed RNA polymerase subunit delta from Staphylococcus aureus (strain bovine RF122 / ET3-1).